Reading from the N-terminus, the 892-residue chain is MRTAEIGQRFVDFFESKGHTVVPSASLLYNDPTLLFVNAGMVPFKPYLMGTEPSPWKRATSIQKCVRTLDIDEVGKTTRHGTFFQMLGNFSFGDYFKNEAIQYAWELVTKPAEQGGLGFDPASIWVTVLGPGFHPDYPEGDIEAREAWRAAGIPDEQIQGRSLKDNYWHMGVPGPGGPCSEIYIDRGPAYGPDGGPEADEDRYLEIWNLVFETEDLSAVRAKDDFDIAGPLRSLNIDTGAGLERIAYLLQGVDNMYETDQVFPVIEKASEMSGKRYGARHDDDVRLRVVADHVRSGLMLMTDGVTPGNEARGYVLRRLLRRVVRAMRLLGVADPVLPELLSVSRDLMADSFPDVLTQWDRVIGAATAEEDTFRRTLSSGTAMLDAAVVETKASGSKTLSGEKAFQLHDTYGFPIDLTLEMAAEQGLEVDRNKFTALMAEQRARAKADSQAKKGLLTDREAYSQVRALGETPFLGYTDLTVDTTVTGIIANGTSVTAAEPGAVVEIVLAETPFYAEMGGQDSDSGIIRANGIDFEVLDVQRPVPGLIVHKVHLDGDLAVGDRVTALVNPATRFGACQAHTATHVIHAALRELVGPSATQAGSYNKPGYLRFDFSATKGLSDSLKDEIEERCNVAIHDDFEVTDTQMPLEDAKAMGAMAMFGEKYPPIVRVVELAGPWSRELCGGTHVASTGRIGMLSLLGEQSVGSGTRRVEALVSTDAFRHMAAERALVNELTGILKVQPDQLADRVSKLAADLKEAERKLGAARTRELLGQVDDIVAGTTPAGSFDLVAAKVPGVAGSDLRTLAAEIRARVKDRPAVVTLIGGTHDKPAMIVATTESARAAGAKAGALIKVGVAPIGGRGGGKDDMAQGAGSDPTGIDAALRAVNTELTAL.

Zn(2+) contacts are provided by H578, H582, C681, and H685.

It belongs to the class-II aminoacyl-tRNA synthetase family. It depends on Zn(2+) as a cofactor.

It is found in the cytoplasm. The enzyme catalyses tRNA(Ala) + L-alanine + ATP = L-alanyl-tRNA(Ala) + AMP + diphosphate. Catalyzes the attachment of alanine to tRNA(Ala) in a two-step reaction: alanine is first activated by ATP to form Ala-AMP and then transferred to the acceptor end of tRNA(Ala). Also edits incorrectly charged Ser-tRNA(Ala) and Gly-tRNA(Ala) via its editing domain. The sequence is that of Alanine--tRNA ligase from Cutibacterium acnes (strain DSM 16379 / KPA171202) (Propionibacterium acnes).